The primary structure comprises 98 residues: Essential MCU regulator, mitochondrial (98 aa).

Residues 52-72 form a helical membrane-spanning segment; that stretch reads ITPFGLFGIIATVIPGLLIGA.

It belongs to the SMDT1/EMRE family.

The protein resides in the mitochondrion inner membrane. Its function is as follows. Essential regulatory subunit of the mitochondrial calcium uniporter (mcu) channel, a protein that mediates calcium uptake into mitochondria. The chain is Essential MCU regulator, mitochondrial from Anopheles gambiae (African malaria mosquito).